The primary structure comprises 272 residues: D-aminoacyl-tRNA deacylase (272 aa).

Belongs to the DtdA deacylase family. Monomer. Requires Zn(2+) as cofactor.

It carries out the reaction a D-aminoacyl-tRNA + H2O = a tRNA + a D-alpha-amino acid + H(+). It catalyses the reaction glycyl-tRNA(Ala) + H2O = tRNA(Ala) + glycine + H(+). D-aminoacyl-tRNA deacylase with broad substrate specificity. By recycling D-aminoacyl-tRNA to D-amino acids and free tRNA molecules, this enzyme counteracts the toxicity associated with the formation of D-aminoacyl-tRNA entities in vivo. The protein is D-aminoacyl-tRNA deacylase of Desulfurococcus amylolyticus (strain DSM 18924 / JCM 16383 / VKM B-2413 / 1221n) (Desulfurococcus kamchatkensis).